A 284-amino-acid chain; its full sequence is Nucleotide-binding protein Sputcn32_0712 (284 aa).

ATP is bound at residue glycine 8–serine 15. Residue aspartate 56–asparagine 59 coordinates GTP.

It belongs to the RapZ-like family.

In terms of biological role, displays ATPase and GTPase activities. This is Nucleotide-binding protein Sputcn32_0712 from Shewanella putrefaciens (strain CN-32 / ATCC BAA-453).